Reading from the N-terminus, the 780-residue chain is MSSGSRPSSGGGGGGGGASGGAGGGAPGGGGGGIRGFFSKLRKPSDQPNGNQVQVGTRTFEAHELQKLIPQLEEAISRKDAQLRQQQTIVEGHIKRISELEGEVTTLQRECDKLRSVLEQKAQSAASPGGQPPSPSPRTDQLGNDLQQKAVLPADGVQRAKKIAVSAEPTNFENKPATLQHYNKTVGAKQMIRDAVQKNDFLKQLAKEQIIELVNCMYEMRARAGQWVIQEGEPGDRLFVVAEGELQVSREGALLGKMRAGTVMGELAILYNCTRTASVQALTDVQLWVLDRSVFQMITQRLGMERHSQLMNFLTKVSIFQNLSEDRISKMADVMDQDYYDGGHYIIRQGEKGDAFFVINSGQVKVTQQIEGETEPREIRVLNQGDFFGERALLGEEVRTANIIAQAPGVEVLTLDRESFGKLIGDLESLKKDYGDKERLAQVVREPPSPVKIVDDFREEFAQVTLKNVKRLATLGVGGFGRVELVCVNGDKAKTFALKALKKKHIVDTRQQEHIFAERNIMMETSTDWIVKLYKTFRDQKFVYMLLEVCLGGELWTTLRDRGHFDDYTARFYVACVLEGLEYLHRKNIVYRDLKPENCLLANTGYLKLVDFGFAKKLASGRKTWTFCGTPEYVSPEIILNKGHDQAADYWALGIYICELMLGRPPFQASDPMKTYTLILKGVDALEIPNRRIGKTATALVKKLCRDNPGERLGSGSGGVNDIRKHRWFMGFDWEGLRSRTLKPPILPKVSNPADVTNFDNYPPDNDVPPDEFSGWDEGF.

Disordered regions lie at residues 1–55 (MSSG…QVQV) and 119–143 (EQKA…DQLG). A compositionally biased stretch (gly residues) spans 9 to 35 (SGGGGGGGGASGGAGGGAPGGGGGGIR). Residues 46 to 55 (DQPNGNQVQV) show a composition bias toward polar residues. A coiled-coil region spans residues 61-127 (EAHELQKLIP…LEQKAQSAAS (67 aa)). Residues 265 to 268 (GELA), 275 to 276 (RT), Arg-380, 389 to 392 (GERA), 399 to 400 (RT), and Tyr-434 each bind 3',5'-cyclic GMP. In terms of domain architecture, Protein kinase spans 469–729 (VKRLATLGVG…VNDIRKHRWF (261 aa)). ATP contacts are provided by residues 475–483 (LGVGGFGRV) and Lys-499. A Nuclear localization signal motif is present at residues 492-504 (KAKTFALKALKKK). The active-site Proton acceptor is Asp-593. Residues 730–780 (MGFDWEGLRSRTLKPPILPKVSNPADVTNFDNYPPDNDVPPDEFSGWDEGF) form the AGC-kinase C-terminal domain. The interval 757 to 780 (TNFDNYPPDNDVPPDEFSGWDEGF) is disordered.

It belongs to the protein kinase superfamily. AGC Ser/Thr protein kinase family. cGMP subfamily. As to quaternary structure, when phosphorylated, interacts with saeg-2. May interact with saeg-1. Requires Mg(2+) as cofactor. Post-translationally, autophosphorylated. As to expression, expressed in AWC sensory neurons (at protein level). Mainly expressed in head neurons, hypodermis, intestine and body wall muscles. L2 and L3 larvae show extensive expression, lower levels are observed in L4 larvae, later embryos and adults. Isoform c is expressed in a subset of neurons in the head, nerve ring, and ventral nerve cord including some motor neurons, also in several neurons in the tail, the pharyngeal marginal cells, body muscle, intestine, vulval muscles, and spermatheca.

The protein localises to the cytoplasm. It localises to the nucleus. The catalysed reaction is L-seryl-[protein] + ATP = O-phospho-L-seryl-[protein] + ADP + H(+). The enzyme catalyses L-threonyl-[protein] + ATP = O-phospho-L-threonyl-[protein] + ADP + H(+). Its activity is regulated as follows. Binding of cGMP results in enzyme activation. Promotes chemoreceptor gene expression in response to increased cGMP levels by antagonizing the gene repression functions of the class II HDAC hda-4 and the mef-2 transcription factor. Regulates gene expression via recruitment of a histone deacetylase complex containing hda-2, saeg-1 and saeg-2. Represses body size and lifespan through the dbl-1 and insulin pathways, respectively. May also signal through daf-3 and/or daf-5. Role in egg-laying, dauer formation and motility. Regulates behavioral responses to various chemosensory stimuli in sensory neurons. Required for the initiation of long term adaptation to prolonged odor exposure which results in a decrease in odor seeking behavior. May regulate this process by phosphorylating tax-2, a subunit of cyclic nucleotide-gated channel tax-2/tax-4. In ASH sensory neurons, negatively regulates avoidance behavior to some bitter tastants, such as quinine, probably by phosphorylating rgs-2 and rgs-3 which are 2 regulator of G-protein signaling proteins. In AWB sensory neurons, involved in avoidance behavior to some repellent odors. In ASE left (ASEL) sensory neuron, involved in the sensing of environmental alkalinity downstream of receptor-type guanylate cyclase gcy-14. In sensory neurons, involved in the signaling pathway downstream of insulin, TGF-beta and receptor-type guanylate cyclase responsible for inducing quiescence after food intake. Might play a role in aversive olfactory learning in AWC neurons when an odor is associated with food deprivation, depending on the ins-1/age-1 signal from the AIA to the AWC neurons. Probably by regulating neuronal transmission downstream of lin-3 and receptor lin-23 and phospholipase plc-3 in ALA neurons, involved in the decrease in locomotion during the quiescent state that precedes each larval molt. This is cGMP-dependent protein kinase egl-4 from Caenorhabditis elegans.